The following is a 436-amino-acid chain: Protein GOLM2 (436 aa).

Met-1 bears the N-acetylmethionine mark. Topologically, residues 1–14 (MVGFGANRRAGRLP) are cytoplasmic. Residues 15-35 (SLVLVVLLVVIVVLAFNYWSI) form a helical; Signal-anchor for type II membrane protein membrane-spanning segment. Residues 35-198 (ISSRHVLLQE…EEQKQETQKI (164 aa)) are a coiled coil. Topologically, residues 36 to 436 (SSRHVLLQEE…YGKQHFNDVL (401 aa)) are lumenal. Residues 225–247 (ADKNEEPSSNHIPHGKEQIKRGG) show a composition bias toward basic and acidic residues. The segment at 225 to 436 (ADKNEEPSSN…YGKQHFNDVL (212 aa)) is disordered. 2 positions are modified to phosphoserine: Ser-233 and Ser-275. Residues 305–321 (NHNGNPGTSKQNPSSPL) are compositionally biased toward polar residues. 2 positions are modified to phosphoserine: Ser-328 and Ser-332. Residues 344–362 (ATKDRVSDFHKLKQSRFFD) show a composition bias toward basic and acidic residues. At Ser-366 the chain carries Phosphoserine. A compositionally biased stretch (acidic residues) spans 399-418 (YNEEEDGDGGEEDVQDDEER). The span at 426-436 (DYGKQHFNDVL) shows a compositional bias: basic and acidic residues.

The protein belongs to the GOLM family.

The protein resides in the membrane. This Homo sapiens (Human) protein is Protein GOLM2.